A 67-amino-acid polypeptide reads, in one-letter code: Surface composition regulator (67 aa).

Belongs to the GlgS family.

In terms of biological role, major determinant of cell surface composition. Negatively regulates motility, adhesion and synthesis of biofilm exopolysaccharides. The chain is Surface composition regulator from Salmonella enteritidis PT4 (strain P125109).